Here is a 333-residue protein sequence, read N- to C-terminus: Homoserine O-succinyltransferase (333 aa).

Cysteine 147 acts as the Acyl-thioester intermediate in catalysis. Substrate is bound by residues lysine 168 and serine 196. The active-site Proton acceptor is histidine 239. The active site involves glutamate 241. Arginine 253 serves as a coordination point for substrate.

It belongs to the MetA family.

It localises to the cytoplasm. It carries out the reaction L-homoserine + succinyl-CoA = O-succinyl-L-homoserine + CoA. Its pathway is amino-acid biosynthesis; L-methionine biosynthesis via de novo pathway; O-succinyl-L-homoserine from L-homoserine: step 1/1. Its function is as follows. Transfers a succinyl group from succinyl-CoA to L-homoserine, forming succinyl-L-homoserine. The protein is Homoserine O-succinyltransferase of Rhodopseudomonas palustris.